Here is a 340-residue protein sequence, read N- to C-terminus: ATP-dependent 6-phosphofructokinase (340 aa).

Gly11 lines the ATP pocket. 21-25 (RAVVR) is a binding site for ADP. Residues 72 to 73 (RY) and 102 to 105 (GDGS) contribute to the ATP site. Asp103 contributes to the Mg(2+) binding site. A substrate-binding site is contributed by 125-127 (TID). Asp127 acts as the Proton acceptor in catalysis. Position 154 (Arg154) interacts with ADP. Substrate-binding positions include Arg162 and 169–171 (MGR). ADP is bound by residues 185 to 187 (GAD) and 213 to 215 (KHH). Residues Glu222, Arg244, and 250–253 (HLLR) each bind substrate.

The protein belongs to the phosphofructokinase type A (PFKA) family. ATP-dependent PFK group I subfamily. Prokaryotic clade 'B1' sub-subfamily. In terms of assembly, homotetramer. The cofactor is Mg(2+).

Its subcellular location is the cytoplasm. It catalyses the reaction beta-D-fructose 6-phosphate + ATP = beta-D-fructose 1,6-bisphosphate + ADP + H(+). It functions in the pathway carbohydrate degradation; glycolysis; D-glyceraldehyde 3-phosphate and glycerone phosphate from D-glucose: step 3/4. Allosterically activated by ADP and other diphosphonucleosides, and allosterically inhibited by phosphoenolpyruvate. Its function is as follows. Catalyzes the phosphorylation of D-fructose 6-phosphate to fructose 1,6-bisphosphate by ATP, the first committing step of glycolysis. The chain is ATP-dependent 6-phosphofructokinase from Streptococcus agalactiae serotype Ia (strain ATCC 27591 / A909 / CDC SS700).